The following is a 153-amino-acid chain: Cytochrome c-type biogenesis protein CcmE (153 aa).

Topologically, residues 1–8 are cytoplasmic; that stretch reads MMTPRQRR. Residues 9–29 form a helical; Signal-anchor for type II membrane protein membrane-spanning segment; sequence MTWVALMVAGVSLAAFFALTA. Over 30–153 the chain is Periplasmic; the sequence is FQKNLLYFYT…PADYSEYRKK (124 aa). Positions 124 and 128 each coordinate heme. A disordered region spans residues 134-153; sequence AESLKKNGGLPADYSEYRKK.

The protein belongs to the CcmE/CycJ family.

It localises to the cell inner membrane. Its function is as follows. Heme chaperone required for the biogenesis of c-type cytochromes. Transiently binds heme delivered by CcmC and transfers the heme to apo-cytochromes in a process facilitated by CcmF and CcmH. This chain is Cytochrome c-type biogenesis protein CcmE, found in Methylococcus capsulatus (strain ATCC 33009 / NCIMB 11132 / Bath).